Reading from the N-terminus, the 426-residue chain is Inositol hexakisphosphate kinase 2 (426 aa).

ATP-binding positions include 207-209 (ENL) and Asp220. Substrate contacts are provided by residues Lys222 and 236 to 243 (KAANQIRK). Asp383 contacts ATP. Residue His386 coordinates substrate.

The protein belongs to the inositol phosphokinase (IPK) family.

It is found in the nucleus. The catalysed reaction is 1D-myo-inositol hexakisphosphate + ATP = 5-diphospho-1D-myo-inositol 1,2,3,4,6-pentakisphosphate + ADP. It participates in phospholipid metabolism; phosphatidylinositol metabolism. Inhibited by flavonoids, including myricetin, quercetin, luteolin, isorhamnetin, rhamnetin, kaempferol, diosmetin and apigenin. In terms of biological role, converts inositol hexakisphosphate (InsP6) to diphosphoinositol pentakisphosphate (InsP7/PP-InsP5). This chain is Inositol hexakisphosphate kinase 2, found in Homo sapiens (Human).